The sequence spans 54 residues: MAAVTIKVKMESTAGTGYYKTTTKNPRNHPEKMELMMYDPKVRKHVLFKEKKVK.

It belongs to the bacterial ribosomal protein bL33 family.

In Legionella pneumophila (strain Lens), this protein is Large ribosomal subunit protein bL33.